The following is a 372-amino-acid chain: 4-hydroxy-3-methylbut-2-en-1-yl diphosphate synthase (flavodoxin) (372 aa).

[4Fe-4S] cluster is bound by residues Cys-270, Cys-273, Cys-305, and Glu-312.

Belongs to the IspG family. [4Fe-4S] cluster serves as cofactor.

The catalysed reaction is (2E)-4-hydroxy-3-methylbut-2-enyl diphosphate + oxidized [flavodoxin] + H2O + 2 H(+) = 2-C-methyl-D-erythritol 2,4-cyclic diphosphate + reduced [flavodoxin]. It participates in isoprenoid biosynthesis; isopentenyl diphosphate biosynthesis via DXP pathway; isopentenyl diphosphate from 1-deoxy-D-xylulose 5-phosphate: step 5/6. Its function is as follows. Converts 2C-methyl-D-erythritol 2,4-cyclodiphosphate (ME-2,4cPP) into 1-hydroxy-2-methyl-2-(E)-butenyl 4-diphosphate. The polypeptide is 4-hydroxy-3-methylbut-2-en-1-yl diphosphate synthase (flavodoxin) (Escherichia coli O139:H28 (strain E24377A / ETEC)).